The chain runs to 229 residues: Type III pantothenate kinase (229 aa).

6–13 (NIGNSRQH) contributes to the ATP binding site. Substrate is bound by residues tyrosine 77 and 81–84 (GIDR). The Proton acceptor role is filled by aspartate 83. Aspartate 103 contacts K(+). Residue threonine 106 participates in ATP binding. Threonine 159 is a binding site for substrate.

Belongs to the type III pantothenate kinase family. Homodimer. Requires NH4(+) as cofactor. The cofactor is K(+).

Its subcellular location is the cytoplasm. The enzyme catalyses (R)-pantothenate + ATP = (R)-4'-phosphopantothenate + ADP + H(+). It functions in the pathway cofactor biosynthesis; coenzyme A biosynthesis; CoA from (R)-pantothenate: step 1/5. In terms of biological role, catalyzes the phosphorylation of pantothenate (Pan), the first step in CoA biosynthesis. The chain is Type III pantothenate kinase from Gloeobacter violaceus (strain ATCC 29082 / PCC 7421).